The chain runs to 306 residues: Phosphoribosylaminoimidazole-succinocarboxamide synthase (306 aa).

Position 2 is an N-acetylserine (S2).

The protein belongs to the SAICAR synthetase family. In terms of assembly, monomer.

It carries out the reaction 5-amino-1-(5-phospho-D-ribosyl)imidazole-4-carboxylate + L-aspartate + ATP = (2S)-2-[5-amino-1-(5-phospho-beta-D-ribosyl)imidazole-4-carboxamido]succinate + ADP + phosphate + 2 H(+). The protein operates within purine metabolism; IMP biosynthesis via de novo pathway; 5-amino-1-(5-phospho-D-ribosyl)imidazole-4-carboxamide from 5-amino-1-(5-phospho-D-ribosyl)imidazole-4-carboxylate: step 1/2. In terms of biological role, catalyzes the reaction of 4-carboxy-5-aminoimidazole ribotide (CAIR) and aspartic acid with the formation of N-succinyl-5-amino-imidazole-4-carboxamide ribotide (SAICAR) in the purine biosynthesis pathway. The polypeptide is Phosphoribosylaminoimidazole-succinocarboxamide synthase (ADE1) (Saccharomyces cerevisiae (strain ATCC 204508 / S288c) (Baker's yeast)).